Here is a 1214-residue protein sequence, read N- to C-terminus: SWI/SNF complex subunit SMARCC2 (1214 aa).

The tract at residues 1–274 (MAVRKKDGGP…PVSRRKKISA (274 aa)) is marR-like, BRCT and chromo domains module. The 127-residue stretch at 10 to 136 (PNVKYYEAAD…IEKSLVQNNC (127 aa)) folds into the MarR-like domain. The BRCT; N-terminus domain maps to 140–183 (PNIFLCPEIEPKLLGKLKDIIKRHQGTVTEDKNNASHVVYPVPG). Positions 189 to 217 (EWVRPVMKRDKQVLLHWGYYPDSYDTWIP) constitute a Chromo domain. A BRCT; C-terminus domain is found at 233-257 (KPRKVHAKWILDTDTFNEWMNEEDY). The interval 257–413 (YEVNDDKNPV…GEQTKNPDLH (157 aa)) is disordered. Polar residues predominate over residues 275-284 (KTLTDEVNSP). Serine 283, serine 286, serine 302, serine 304, and serine 306 each carry phosphoserine. At lysine 312 the chain carries N6-(ADP-ribosyl)lysine. An N6-acetyllysine modification is found at lysine 326. Residues 331 to 344 (HREEEQEDLTKDMD) show a composition bias toward basic and acidic residues. Residues serine 347 and serine 387 each carry the phosphoserine modification. Over residues 379-398 (DLDEQEDESMETTGKDEDEN) the composition is skewed to acidic residues. Positions 424–521 (IIIPSYAAWF…YQVDAESRPT (98 aa)) constitute an SWIRM domain. Threonine 548 is subject to Phosphothreonine. Residues lysine 564, lysine 566, lysine 568, and lysine 592 each participate in a glycyl lysine isopeptide (Lys-Gly) (interchain with G-Cter in SUMO2) cross-link. The SANT domain maps to 596 to 647 (SATREWTEQETLLLLEALEMYKDDWNKVSEHVGSRTQDECILHFLRLPIEDP). Lysine 704 is covalently cross-linked (Glycyl lysine isopeptide (Lys-Gly) (interchain with G-Cter in SUMO2)). A disordered region spans residues 724–852 (KVTGKADPAF…GERKTKVERD (129 aa)). Composition is skewed to basic and acidic residues over residues 747 to 777 (EPERIEESGNDEARVEGQATDEKKEPKEPRE) and 784 to 852 (EEAK…VERD). Lysine 787 is covalently cross-linked (Glycyl lysine isopeptide (Lys-Gly) (interchain with G-Cter in SUMO2)). The residue at position 813 (serine 813) is a Phosphoserine. Residue lysine 848 forms a Glycyl lysine isopeptide (Lys-Gly) (interchain with G-Cter in SUMO2) linkage. A coiled-coil region spans residues 907 to 934 (EELETIMDREREALEYQRQQLLADRQAF). Disordered stretches follow at residues 947–983 (RQQHFQQMHQQQQQPPPALPPGSQPIPPTGAAGPPAV), 997–1092 (PAGS…PPPP), and 1182–1214 (LPSASPLPDPGTPLPPDPTAPSPGTVTPVPPPQ). The span at 949–959 (QHFQQMHQQQQ) shows a compositional bias: low complexity. Pro residues predominate over residues 960–974 (QPPPALPPGSQPIPP). Low complexity predominate over residues 997–1033 (PAGSGAPPGSLGPSEQIGQAGSTAGPQQQQPAGAPQP). 2 stretches are compositionally biased toward pro residues: residues 1034–1051 (GAVPPGVPPPGPHGPSPF) and 1186–1202 (SPLPDPGTPLPPDPTAP).

It belongs to the SMARCC family. In terms of assembly, component of the multiprotein chromatin-remodeling complexes SWI/SNF: SWI/SNF-A (BAF), SWI/SNF-B (PBAF) and related complexes. The canonical complex contains a catalytic subunit (either SMARCA4/BRG1/BAF190A or SMARCA2/BRM/BAF190B) and at least SMARCE1, ACTL6A/BAF53, SMARCC1/BAF155, SMARCC2/BAF170, and SMARCB1/SNF5/BAF47. Other subunits specific to each of the complexes may also be present permitting several possible combinations developmentally and tissue specific. Component of the BAF complex, which includes at least actin (ACTB), ARID1A/BAF250A, ARID1B/BAF250B, SMARCA2/BRM, SMARCA4/BRG1, ACTL6A/BAF53, ACTL6B/BAF53B, SMARCE1/BAF57, SMARCC1/BAF155, SMARCC2/BAF170, SMARCB1/SNF5/INI1, and one or more SMARCD1/BAF60A, SMARCD2/BAF60B, or SMARCD3/BAF60C. In muscle cells, the BAF complex also contains DPF3. Component of neural progenitors-specific chromatin remodeling complex (npBAF complex) composed of at least, ARID1A/BAF250A or ARID1B/BAF250B, SMARCD1/BAF60A, SMARCD3/BAF60C, SMARCA2/BRM/BAF190B, SMARCA4/BRG1/BAF190A, SMARCB1/BAF47, SMARCC1/BAF155, SMARCE1/BAF57, SMARCC2/BAF170, PHF10/BAF45A, ACTL6A/BAF53A and actin. Component of neuron-specific chromatin remodeling complex (nBAF complex) composed of at least, ARID1A/BAF250A or ARID1B/BAF250B, SMARCD1/BAF60A, SMARCD3/BAF60C, SMARCA2/BRM/BAF190B, SMARCA4/BRG1/BAF190A, SMARCB1/BAF47, SMARCC1/BAF155, SMARCE1/BAF57, SMARCC2/BAF170, DPF1/BAF45B, DPF3/BAF45C, ACTL6B/BAF53B and actin. Component of the SWI/SNF-B (PBAF) chromatin remodeling complex, at least composed of SMARCA4/BRG1, SMARCB1/BAF47/SNF5, ACTL6A/BAF53A or ACTL6B/BAF53B, SMARCE1/BAF57, SMARCD1/BAF60A, SMARCD2/BAF60B, perhaps SMARCD3/BAF60C, SMARCC1/BAF155, SMARCC2/BAF170, PBRM1/BAF180, ARID2/BAF200 and actin. May also interact with the SIN3A histone deacetylase transcription repressor complex in conjunction with SMARCA2 and SMARCA4. Interacts with SMARD1. Interacts with KDM6B. Interaction with RCOR1. Interacts with DPF2. Interacts with ERCC6. Interacts with FOS. Post-translationally, mono-ADP-ribosylation at Lys-312 by SIRT6 promotes recruitment to the enhancer region of the Heme oxygenase-1 (HO-1) locus, leading to transcription activation of the locus. Ubiquitously expressed.

The protein resides in the nucleus. Functionally, involved in transcriptional activation and repression of select genes by chromatin remodeling (alteration of DNA-nucleosome topology). Component of SWI/SNF chromatin remodeling complexes that carry out key enzymatic activities, changing chromatin structure by altering DNA-histone contacts within a nucleosome in an ATP-dependent manner. Can stimulate the ATPase activity of the catalytic subunit of these complexes. May be required for CoREST dependent repression of neuronal specific gene promoters in non-neuronal cells. Belongs to the neural progenitors-specific chromatin remodeling complex (npBAF complex) and the neuron-specific chromatin remodeling complex (nBAF complex). During neural development a switch from a stem/progenitor to a postmitotic chromatin remodeling mechanism occurs as neurons exit the cell cycle and become committed to their adult state. The transition from proliferating neural stem/progenitor cells to postmitotic neurons requires a switch in subunit composition of the npBAF and nBAF complexes. As neural progenitors exit mitosis and differentiate into neurons, npBAF complexes which contain ACTL6A/BAF53A and PHF10/BAF45A, are exchanged for homologous alternative ACTL6B/BAF53B and DPF1/BAF45B or DPF3/BAF45C subunits in neuron-specific complexes (nBAF). The npBAF complex is essential for the self-renewal/proliferative capacity of the multipotent neural stem cells. The nBAF complex along with CREST plays a role regulating the activity of genes essential for dendrite growth. Critical regulator of myeloid differentiation, controlling granulocytopoiesis and the expression of genes involved in neutrophil granule formation. This is SWI/SNF complex subunit SMARCC2 (SMARCC2) from Homo sapiens (Human).